A 122-amino-acid polypeptide reads, in one-letter code: Large ribosomal subunit protein uL14 (122 aa).

Belongs to the universal ribosomal protein uL14 family. As to quaternary structure, part of the 50S ribosomal subunit. Forms a cluster with proteins L3 and L19. In the 70S ribosome, L14 and L19 interact and together make contacts with the 16S rRNA in bridges B5 and B8.

Its function is as follows. Binds to 23S rRNA. Forms part of two intersubunit bridges in the 70S ribosome. This is Large ribosomal subunit protein uL14 from Sulfurihydrogenibium sp. (strain YO3AOP1).